A 266-amino-acid chain; its full sequence is Putative carbamate hydrolase RutD (266 aa).

The protein belongs to the AB hydrolase superfamily. Hydrolase RutD family.

It carries out the reaction carbamate + 2 H(+) = NH4(+) + CO2. In terms of biological role, involved in pyrimidine catabolism. May facilitate the hydrolysis of carbamate, a reaction that can also occur spontaneously. The sequence is that of Putative carbamate hydrolase RutD from Escherichia coli O103:H2 (strain 12009 / EHEC).